Reading from the N-terminus, the 283-residue chain is ACT domain-containing protein DS12, chloroplastic (283 aa).

The N-terminal 56 residues, 1–56 (MAEMAVTAALRPCSGVSPAVSGTSHRRRRPAAWRALAPPPPHAGLRLSSPAVRVPR), are a transit peptide targeting the chloroplast. The interval 14-78 (SGVSPAVSGT…SNTDTVPTPK (65 aa)) is disordered. A compositionally biased stretch (low complexity) spans 48 to 63 (SSPAVRVPRAASSAAV). ACT domains follow at residues 91 to 171 (IVEI…ASSQ) and 206 to 276 (LLVV…LRRP).

Its subcellular location is the plastid. The protein localises to the chloroplast. The sequence is that of ACT domain-containing protein DS12, chloroplastic from Oryza sativa subsp. indica (Rice).